The sequence spans 631 residues: ESX-3 secretion system protein EccA3 (631 aa).

An ATP-binding site is contributed by 385-392; the sequence is GPPGTGKT.

Belongs to the CbxX/CfxQ family. Part of the ESX-3 / type VII secretion system (T7SS), which is composed of cytosolic and membrane components.

The protein resides in the cytoplasm. Part of the ESX-3 specialized secretion system, which is important for iron and zinc uptake or homeostasis. EccA3 exhibits ATPase activity and may provide energy for the export of ESX-3 substrates. The chain is ESX-3 secretion system protein EccA3 from Mycobacterium tuberculosis (strain CDC 1551 / Oshkosh).